Reading from the N-terminus, the 312-residue chain is Acyl-CoA C20 Delta5-desaturase (312 aa).

The next 2 helical transmembrane spans lie at 45 to 65 (VFHI…PSTF) and 69 to 89 (SFWV…TLSF). His90, His95, His127, His130, and His131 together coordinate Fe cation. Residues 90 to 95 (HRNLTH) carry the Histidine box-1 motif. The Histidine box-2 motif lies at 127 to 131 (HRYHH). The helical transmembrane segment at 193 to 213 (LQAALLYLFGGFPFIVWGMAV) threads the bilayer. Residues His230, His259, His262, and His263 each coordinate Fe cation. Positions 259-263 (HNNHH) match the Histidine box-3 motif.

Belongs to the fatty acid desaturase type 1 family. It depends on Fe(2+) as a cofactor.

The protein localises to the membrane. It catalyses the reaction (11Z,14Z)-eicosadienoyl-CoA + AH2 + O2 = (5Z,11Z,14Z)-eicosatrienoyl-CoA + A + 2 H2O. It carries out the reaction (11Z,14Z,17Z)-eicosatrienoyl-CoA + AH2 + O2 = (5Z,11Z,14Z,17Z)-eicosatetraenoyl-CoA + A + 2 H2O. The protein operates within lipid metabolism; polyunsaturated fatty acid biosynthesis. In terms of biological role, catalyzes the desaturation of 20:2Delta(11,14) and 20:3Delta(11,14,17) to generate sciadonic acid (20:3Delta(5,11,14)) and juniperonic acid (20:4Delta(5,11,14,17)). The polypeptide is Acyl-CoA C20 Delta5-desaturase (Anemone leveillei (Windflower)).